We begin with the raw amino-acid sequence, 410 residues long: MDKLLDRFLNYVSFDTQSKSGVRQVPSTDGQLKLARALQQELLELGFEQIVLSKQGCLTAALPSNVAWSVPAIGFISHMDTSPDFSGKNVNPQILENYRGGDIALGVGDEVLSPVMFPVLHQLLGHTLITTDGKTLLGADDKAGIAEIITALVRLKKSQLPHGDIRIAFTPDEEIGKGAQFFDVKAFNAQWAYTVDGGGVGELEYENFNAASVQVKIVGNNVHPGSAKGVMVNALTLASRYHQHVPESESPEQTEGYQGFYHLHSMKGSVERADLHYIVRDFDRNGFEQRKQTMLDIAEKVGAGLHPDCYIEVTITDTYYNMREQVEQHPHIIALAQQAMRDCSIEPNMKPIRGGTDGAHLSFQGLPCPNLFTGGYNYHGKHEFVTLEGMEKAVSVIMRIAELTALRAKP.

Position 78 (His-78) interacts with Zn(2+). The active site involves Asp-80. Asp-140 contributes to the Zn(2+) binding site. The active-site Proton acceptor is the Glu-173. 3 residues coordinate Zn(2+): Glu-174, Asp-196, and His-379.

This sequence belongs to the peptidase M20B family. Zn(2+) is required as a cofactor.

The protein localises to the cytoplasm. It catalyses the reaction Release of the N-terminal residue from a tripeptide.. Its function is as follows. Cleaves the N-terminal amino acid of tripeptides. The chain is Peptidase T from Pectobacterium atrosepticum (strain SCRI 1043 / ATCC BAA-672) (Erwinia carotovora subsp. atroseptica).